The primary structure comprises 446 residues: Cobalamin biosynthesis protein CbiHC (446 aa).

A cobalt-factor III C(17)-methyltransferase region spans residues 1–246 (MLLLPSRGKL…MFTPRGYSNK (246 aa)). The tract at residues 247–446 (YNIGEKRRAE…CLIEHADRPD (200 aa)) is cobalt-precorrin-8 methylmutase.

It in the N-terminal section; belongs to the precorrin methyltransferase family. In the C-terminal section; belongs to the CobH family.

It catalyses the reaction Co(II)-factor III + S-adenosyl-L-methionine + H(+) = Co(II)-factor IV + S-adenosyl-L-homocysteine. The catalysed reaction is Co-precorrin-8X = cob(II)yrinate. The protein operates within cofactor biosynthesis; adenosylcobalamin biosynthesis; cob(II)yrinate a,c-diamide from sirohydrochlorin (anaerobic route): step 3/10. It participates in cofactor biosynthesis; adenosylcobalamin biosynthesis; cob(II)yrinate a,c-diamide from sirohydrochlorin (anaerobic route): step 9/10. Functionally, bifunctional enzyme with a methyltransferase domain that catalyzes the ring contraction and methylation of C-17 in cobalt-factor III to form cobalt-factor IV, and an isomerase domain that catalyzes the conversion of cobalt-precorrin-8 to cobyrinate. The sequence is that of Cobalamin biosynthesis protein CbiHC (cbiHC) from Archaeoglobus fulgidus (strain ATCC 49558 / DSM 4304 / JCM 9628 / NBRC 100126 / VC-16).